We begin with the raw amino-acid sequence, 40 residues long: Cytochrome c3 hydrogenase small chain (40 aa).

The cofactor is Fe cation.

It carries out the reaction 2 Fe(III)-[cytochrome c3] + H2 = 2 Fe(II)-[cytochrome c3] + 2 H(+). The polypeptide is Cytochrome c3 hydrogenase small chain (hoxK) (Acidithiobacillus ferrooxidans (Thiobacillus ferrooxidans)).